The sequence spans 1192 residues: Outer capsid protein VP2 (1192 aa).

Positions Ile1112 to Arg1192 are disordered. Over residues Pro1140–Thr1150 the composition is skewed to low complexity. A compositionally biased stretch (polar residues) spans Asn1159–Gln1183.

The protein localises to the virion. It catalyses the reaction a 5'-end diphospho-ribonucleoside in mRNA + GTP + H(+) = a 5'-end (5'-triphosphoguanosine)-ribonucleoside in mRNA + diphosphate. It carries out the reaction a 5'-end (5'-triphosphoguanosine)-ribonucleoside in mRNA + S-adenosyl-L-methionine = a 5'-end (N(7)-methyl 5'-triphosphoguanosine)-ribonucleoside in mRNA + S-adenosyl-L-homocysteine. Functionally, outer capsid protein involved in mRNA capping. Catalyzes the last 3 enzymatic activities for formation of the 5' cap structure on the viral plus-strand transcripts, namely the RNA guanylyltransferase, RNA-7N- and RNA-2'O-methyltransferase activities. The protein is Outer capsid protein VP2 (S2) of Rice ragged stunt virus (isolate Thailand) (RRSV).